The following is a 479-amino-acid chain: U2 small nuclear ribonucleoprotein auxiliary factor 35 kDa subunit-related protein 1 (479 aa).

The disordered stretch occupies residues 1-63 (MAALEKMTFP…EDTFIEEQQL (63 aa)). A compositionally biased stretch (basic residues) spans 20–37 (SHKKYRAALKKEKRKKRR). Positions 50 to 63 (QEEEEDTFIEEQQL) are enriched in acidic residues. Residue Lys67 forms a Glycyl lysine isopeptide (Lys-Gly) (interchain with G-Cter in SUMO2) linkage. A C3H1-type 1 zinc finger spans residues 171–199 (EKDRANCPFYSKTGACRFGDRCSRKHNFP). The 107-residue stretch at 203–309 (PTLLIKSMFT…RQLQCEFCPV (107 aa)) folds into the RRM domain. The C3H1-type 2 zinc-finger motif lies at 311–338 (RWKMAICGLFEIQQCPRGKHCNFLHVFR). Phosphoserine is present on Ser354. Residues 356 to 479 (DQTGSSFGKN…DRTVQSPQSK (124 aa)) form a disordered region. Basic and acidic residues-rich tracts occupy residues 365–379 (NSERREKMGHHDHYY) and 388–403 (PSPDHTYKRNGESERK). The residue at position 389 (Ser389) is a Phosphoserine. Basic residues-rich tracts occupy residues 404 to 417 (KSSHRGKKSHKRTS) and 442 to 451 (SQSRRSHRSR).

Its subcellular location is the nucleus. This Homo sapiens (Human) protein is U2 small nuclear ribonucleoprotein auxiliary factor 35 kDa subunit-related protein 1.